Here is a 300-residue protein sequence, read N- to C-terminus: NAD kinase (300 aa).

Aspartate 75 serves as the catalytic Proton acceptor. Residues 75-76 (DG), 149-150 (ND), arginine 177, aspartate 179, 190-195 (TAYALS), alanine 214, and glutamine 248 contribute to the NAD(+) site.

This sequence belongs to the NAD kinase family. Requires a divalent metal cation as cofactor.

It is found in the cytoplasm. The enzyme catalyses NAD(+) + ATP = ADP + NADP(+) + H(+). Its function is as follows. Involved in the regulation of the intracellular balance of NAD and NADP, and is a key enzyme in the biosynthesis of NADP. Catalyzes specifically the phosphorylation on 2'-hydroxyl of the adenosine moiety of NAD to yield NADP. In Burkholderia cenocepacia (strain HI2424), this protein is NAD kinase.